The chain runs to 698 residues: MTIFRPHLRFLFKPHFLYFQSPAGQSSRPFSTSQILRTALDMPPPPVDTTQRLAKLRELMAQNKVDVYSMQFRYTIKAPLIITVVYSFFFFLLLALKLCLRKTAISQSTLLHVMGVETLIRITAAFISSFTGSAGCAIVSMSKAALSTDGRYFSQAAKQLDSNWTLLKRGVEGVPTWEEWTAEQAENGKVVGVDPSLITAGENLHYTPLTSVVVTNCSYVIADARKLSQTLKTTGGSLVGIDQNLIDAVWGNERPARPANQITVQPVERAGKPFEEKVEDLRKELAAKKRSAMVISTLDEIAWLFNLRGSDIPYNPVFFSYAIVTPSVAELYVDESKLSPEARKHLEGKVVLKPYDSIFQASKVLAESKASASSGSSGKFLLSNKASWSLSLALGGEQNVVEVRSPITDAKAIKNEVELEGFRKCHIRDGAALIEYFAWLENALIKEGAQLDEVDGADKLFEIRKKYDLFVGNSFDTISSTGANGATIHYKPEKSTCAVIDPKAMYLCDSGGQYLDGTTDTTRTLHFGEPTEFQKKAYALVLKGHISIDNAIFPKGTTGYAIDSFARQHLWKEGLDYLHGTGHGVGSFLYAEVPLSASNVLSNEPGYYEDGNFGIRLENLVICKEVQTAHKFGDKPFLGFESITLVPFCQKLLDASLLTEAERKWVNDYHARVWEKTSPFFEKDELTTAWLKRETQPI.

Asp509, Asp520, Glu604, and Glu618 together coordinate Mn(2+).

The protein belongs to the peptidase M24B family. Requires Mn(2+) as cofactor.

It carries out the reaction Release of any N-terminal amino acid, including proline, that is linked to proline, even from a dipeptide or tripeptide.. In terms of biological role, catalyzes the removal of a penultimate prolyl residue from the N-termini of peptides. The protein is Probable Xaa-Pro aminopeptidase P (AMPP) of Trichophyton verrucosum (strain HKI 0517).